The sequence spans 166 residues: Cytochrome c-type biogenesis protein CcmE (166 aa).

At 1 to 8 (MNAVRRKK) the chain is on the cytoplasmic side. The helical; Signal-anchor for type II membrane protein transmembrane segment at 9-29 (LMWVMFTLAGAVIAVALVIYA) threads the bilayer. The Periplasmic segment spans residues 30–166 (IGKQTDYYFD…KLHETKTLQQ (137 aa)). Heme-binding residues include H124 and Y128. Residues 133 to 166 (VAKSMKENNRSGAVPSSEQYNPAEKLHETKTLQQ) form a disordered region. Polar residues predominate over residues 142–152 (RSGAVPSSEQY). The segment covering 156–166 (EKLHETKTLQQ) has biased composition (basic and acidic residues).

Belongs to the CcmE/CycJ family.

Its subcellular location is the cell inner membrane. Heme chaperone required for the biogenesis of c-type cytochromes. Transiently binds heme delivered by CcmC and transfers the heme to apo-cytochromes in a process facilitated by CcmF and CcmH. This chain is Cytochrome c-type biogenesis protein CcmE, found in Psychrobacter arcticus (strain DSM 17307 / VKM B-2377 / 273-4).